The primary structure comprises 123 residues: Large ribosomal subunit protein bL17 (123 aa).

Belongs to the bacterial ribosomal protein bL17 family. Part of the 50S ribosomal subunit. Contacts protein L32.

The sequence is that of Large ribosomal subunit protein bL17 from Borreliella afzelii (strain PKo) (Borrelia afzelii).